Here is a 376-residue protein sequence, read N- to C-terminus: 5-amino-6-(D-ribitylamino)uracil--L-tyrosine 4-hydroxyphenyl transferase 1 (376 aa).

Residues 50-275 enclose the Radical SAM core domain; that stretch reads VTYVVNRNIN…PGLEDLKVYA (226 aa). Cysteine 64, cysteine 68, and cysteine 71 together coordinate [4Fe-4S] cluster.

This sequence belongs to the radical SAM superfamily. CofH family. Consists of two subunits, CofG and CofH. It depends on [4Fe-4S] cluster as a cofactor.

The catalysed reaction is 5-amino-6-(D-ribitylamino)uracil + L-tyrosine + S-adenosyl-L-methionine = 5-amino-5-(4-hydroxybenzyl)-6-(D-ribitylimino)-5,6-dihydrouracil + 2-iminoacetate + 5'-deoxyadenosine + L-methionine + H(+). Its pathway is cofactor biosynthesis; coenzyme F0 biosynthesis. Catalyzes the radical-mediated synthesis of 5-amino-5-(4-hydroxybenzyl)-6-(D-ribitylimino)-5,6-dihydrouracil from 5-amino-6-(D-ribitylamino)uracil and L-tyrosine. This Methanosarcina mazei (strain ATCC BAA-159 / DSM 3647 / Goe1 / Go1 / JCM 11833 / OCM 88) (Methanosarcina frisia) protein is 5-amino-6-(D-ribitylamino)uracil--L-tyrosine 4-hydroxyphenyl transferase 1.